Here is a 484-residue protein sequence, read N- to C-terminus: MKFKQDFFTQLPEFYSQVYPQGITKPEWLAWSDDAAQLIGLSQPTDELLLGLSGNTAVDGATYYAQVYSGHQFGGYTPRLGDGRSIILGEAIGPNGVWDVALKGGGPTPYSRRGDGRAVMRSAVREFLVSEALHHLHVPTTRALAVIGSDLPVWRESQETAAITVRLARSHIRFGHFEFFCHSERGRADKLIQLLNFTITQHYPHLSCDAAGYKAWFLQVVQDTAKMIAHWQAVGFAHGVMNTDNMSILGDSFDFGPFAFLDTFQEDFICNHSDPEGRYAFGQQPGVGLWNLQRLAQALTPVIPSDDLIAILNQYQEALVQPYLRLMRAKLGLSAVDVPSVEQDKQDLDLIGRFTVLMEKNQLDYTQTWRQLGKLDPTSKHSALRDDFIDVSQFDTWYQAYQLRLGAVADIPAWQTERNSVNPKYILRNYLAQEAIIAVEEGNLAPLHLLQKILTQPFAEHADHEDLAKRPPDWGQGLIMSCSS.

ATP-binding residues include Gly-81, Gly-83, Arg-84, Lys-103, Asp-115, Gly-116, Arg-166, and Arg-173. Asp-244 acts as the Proton acceptor in catalysis. Asn-245 and Asp-254 together coordinate Mg(2+). Asp-254 contributes to the ATP binding site.

The protein belongs to the SELO family. The cofactor is Mg(2+). Requires Mn(2+) as cofactor.

The catalysed reaction is L-seryl-[protein] + ATP = 3-O-(5'-adenylyl)-L-seryl-[protein] + diphosphate. The enzyme catalyses L-threonyl-[protein] + ATP = 3-O-(5'-adenylyl)-L-threonyl-[protein] + diphosphate. It catalyses the reaction L-tyrosyl-[protein] + ATP = O-(5'-adenylyl)-L-tyrosyl-[protein] + diphosphate. It carries out the reaction L-histidyl-[protein] + UTP = N(tele)-(5'-uridylyl)-L-histidyl-[protein] + diphosphate. The catalysed reaction is L-seryl-[protein] + UTP = O-(5'-uridylyl)-L-seryl-[protein] + diphosphate. The enzyme catalyses L-tyrosyl-[protein] + UTP = O-(5'-uridylyl)-L-tyrosyl-[protein] + diphosphate. Functionally, nucleotidyltransferase involved in the post-translational modification of proteins. It can catalyze the addition of adenosine monophosphate (AMP) or uridine monophosphate (UMP) to a protein, resulting in modifications known as AMPylation and UMPylation. This Shewanella baltica (strain OS195) protein is Protein nucleotidyltransferase YdiU.